Reading from the N-terminus, the 350-residue chain is Mitochondrial glycine transporter (350 aa).

Solcar repeat units follow at residues 23–107, 134–218, and 250–334; these read SKPK…LRQC, LSHT…SKKN, and SSIS…LILK. A run of 6 helical transmembrane segments spans residues 29–54, 82–108, 140–165, 193–216, 254–280, and 309–327; these read FIAG…TRIQ, GTLP…RQCI, LLTG…VRYE, GFGA…EQSK, VNFV…KTRL, and GLGL…AWTV.

The protein belongs to the mitochondrial carrier (TC 2.A.29) family. SLC25A38 subfamily.

It localises to the mitochondrion inner membrane. It catalyses the reaction glycine(in) = glycine(out). Mitochondrial glycine transporter that imports glycine into the mitochondrial matrix. Plays an important role in providing glycine for the first enzymatic step in heme biosynthesis, the condensation of glycine with succinyl-CoA to produce 5-aminolevulinate (ALA) in the mitochondrial matrix. The polypeptide is Mitochondrial glycine transporter (Ajellomyces capsulatus (strain NAm1 / WU24) (Darling's disease fungus)).